The following is a 147-amino-acid chain: Hemoglobin subunit beta (147 aa).

At valine 2 the chain carries N-acetylvaline. Residues 3 to 147 (HMSAEEKGIV…VAAALAHKYH (145 aa)) form the Globin domain. Threonine 13 is subject to Phosphothreonine. At serine 45 the chain carries Phosphoserine. Lysine 60 bears the N6-acetyllysine mark. Histidine 64 is a heme b binding site. Lysine 83 is modified (N6-acetyllysine). Residue histidine 93 coordinates heme b. Residue cysteine 94 is modified to S-nitrosocysteine. An N6-acetyllysine modification is found at lysine 145.

Belongs to the globin family. Heterotetramer of two alpha chains and two beta chains. Red blood cells.

Its function is as follows. Involved in oxygen transport from the lung to the various peripheral tissues. The chain is Hemoglobin subunit beta (HBB) from Scalopus aquaticus (Eastern mole).